The chain runs to 965 residues: Vacuolar membrane protease (965 aa).

Residues 1 to 16 (MARPSLSPSNPLGFTP) lie on the Cytoplasmic side of the membrane. A helical membrane pass occupies residues 17–37 (WPVTVITAVVYLALVVPLLVV). The Vacuolar segment spans residues 38–387 (HHVVPSAPSS…SAFVVFELHT (350 aa)). Asn53 and Asn119 each carry an N-linked (GlcNAc...) asparagine glycan. Residues His171 and Asp183 each contribute to the Zn(2+) site. The Proton acceptor role is filled by Glu217. Zn(2+) is bound by residues Glu218, Glu243, and His316. A helical transmembrane segment spans residues 388-408 (LFALSVTLLVVAPLVLLVTSI). Over 409–441 (ALARADKMYLFRSSASPEDSDGSEVVPLHGVRG) the chain is Cytoplasmic. A helical membrane pass occupies residues 442 to 462 (FFRFPFLLVIPTAVTVGLAYL). The Vacuolar segment spans residues 463–472 (VTKFNPYIIH). The chain crosses the membrane as a helical span at residues 473–493 (SSEYAVWSMMISAWVFLAWFV). Over 494 to 507 (SRVADFARPSAFHR) the chain is Cytoplasmic. The helical transmembrane segment at 508–528 (VYTLTWLFLVEWVFLVISTVY) threads the bilayer. Residues 529–532 (ENQY) lie on the Vacuolar side of the membrane. The chain crosses the membrane as a helical span at residues 533-553 (GLAGGYFVLFVFAGTFLATWI). The Cytoplasmic segment spans residues 554–661 (SYLELFALPR…WSIHLPKWVW (108 aa)). A disordered region spans residues 577–610 (RTSSHGSRLGTASGEDVEDGEDEDDDGTTAEATE). The span at 591 to 604 (EDVEDGEDEDDDGT) shows a compositional bias: acidic residues. A helical membrane pass occupies residues 662-682 (VLQFLLTAPLVLIFVGPLALL). The Vacuolar segment spans residues 683-698 (LTSALRQTGQDGSPSL). The helical transmembrane segment at 699-719 (FIYIAVAALTTLLFIPLLPFI) threads the bilayer. The Cytoplasmic segment spans residues 720-725 (HRYTHH). A helical membrane pass occupies residues 726–746 (IPLFLLCVFAGTLIYNLVAFP). Residues 747–965 (FSPANRLKLF…LVEGSRRFEV (219 aa)) are Vacuolar-facing. Asn793 and Asn830 each carry an N-linked (GlcNAc...) asparagine glycan.

It belongs to the peptidase M28 family. It depends on Zn(2+) as a cofactor.

It localises to the vacuole membrane. Functionally, may be involved in vacuolar sorting and osmoregulation. This is Vacuolar membrane protease from Aspergillus fumigatus (strain CBS 144.89 / FGSC A1163 / CEA10) (Neosartorya fumigata).